The chain runs to 164 residues: MMLPVTSISNSLPRVASSSFGEQAQFERALAQAADSMKNDTASTPVRTAPISPPMDVHRAAPTSPLEDRVLQTISSICPDSIVAAAAPNHKAALISGAPPGPSQKLPVEGGAGTERLGIPQGGHDFDVMVAGLRDLYNGVTQVALVSKGISGITSSVNKLLKEG.

Disordered stretches follow at residues 37 to 57 (MKND…PMDV) and 94 to 119 (LISG…RLGI).

This chain is Nodulation protein NolB (nolB), found in Sinorhizobium fredii (strain NBRC 101917 / NGR234).